The following is a 148-amino-acid chain: 3-hydroxyacyl-[acyl-carrier-protein] dehydratase FabZ (148 aa).

H55 is an active-site residue.

The protein belongs to the thioester dehydratase family. FabZ subfamily.

The protein resides in the cytoplasm. It carries out the reaction a (3R)-hydroxyacyl-[ACP] = a (2E)-enoyl-[ACP] + H2O. Functionally, involved in unsaturated fatty acids biosynthesis. Catalyzes the dehydration of short chain beta-hydroxyacyl-ACPs and long chain saturated and unsaturated beta-hydroxyacyl-ACPs. This is 3-hydroxyacyl-[acyl-carrier-protein] dehydratase FabZ from Haemophilus influenzae (strain PittEE).